Here is a 284-residue protein sequence, read N- to C-terminus: Efem/EfeO family lipoprotein (284 aa).

An N-terminal signal peptide occupies residues 1–17 (MKKLTTLLLASTLLIAA). Cys18 carries N-palmitoyl cysteine lipidation. Cys18 carries S-diacylglycerol cysteine lipidation.

Belongs to the EfeM/EfeO family.

Its subcellular location is the cell membrane. In Staphylococcus aureus (strain MSSA476), this protein is Efem/EfeO family lipoprotein.